The primary structure comprises 81 residues: Photosystem I iron-sulfur center (81 aa).

2 consecutive 4Fe-4S ferredoxin-type domains span residues 1 to 31 (MSHK…MVPW) and 39 to 68 (IASS…IRVY). [4Fe-4S] cluster contacts are provided by Cys-11, Cys-14, Cys-17, Cys-21, Cys-48, Cys-51, Cys-54, and Cys-58.

In terms of assembly, the cyanobacterial PSI reaction center is composed of one copy each of PsaA,B,C,D,E,F,I,J,K,L,M and X, and forms trimeric complexes. [4Fe-4S] cluster is required as a cofactor.

The protein localises to the cellular thylakoid membrane. It catalyses the reaction reduced [plastocyanin] + hnu + oxidized [2Fe-2S]-[ferredoxin] = oxidized [plastocyanin] + reduced [2Fe-2S]-[ferredoxin]. In terms of biological role, apoprotein for the two 4Fe-4S centers FA and FB of photosystem I (PSI); essential for photochemical activity. FB is the terminal electron acceptor of PSI, donating electrons to ferredoxin. The C-terminus interacts with PsaA/B/D and helps assemble the protein into the PSI complex. Required for binding of PsaD and PsaE to PSI. PSI is a plastocyanin/cytochrome c6-ferredoxin oxidoreductase, converting photonic excitation into a charge separation, which transfers an electron from the donor P700 chlorophyll pair to the spectroscopically characterized acceptors A0, A1, FX, FA and FB in turn. This Rippkaea orientalis (strain PCC 8801 / RF-1) (Cyanothece sp. (strain PCC 8801)) protein is Photosystem I iron-sulfur center.